The sequence spans 494 residues: Cytochrome P450 2A11 (494 aa).

Lys379 bears the N6-acetyllysine mark. Position 439 (Cys439) interacts with heme.

It belongs to the cytochrome P450 family. Heme is required as a cofactor. In terms of tissue distribution, expressed in liver and lung as well as in nasal tissues.

It is found in the endoplasmic reticulum membrane. It localises to the microsome membrane. The catalysed reaction is an organic molecule + reduced [NADPH--hemoprotein reductase] + O2 = an alcohol + oxidized [NADPH--hemoprotein reductase] + H2O + H(+). Its function is as follows. Catalyzes the oxygenation of a variety of substrates, including ethanol and procarcinogens such as N-nitrosodiethylamine and phenacetin. Has no or little activity as a coumarin 7-hydroxylase and in the formation of androstenedione from testosterone. In Oryctolagus cuniculus (Rabbit), this protein is Cytochrome P450 2A11 (CYP2A11).